The primary structure comprises 231 residues: Large ribosomal subunit protein uL1 (231 aa).

It belongs to the universal ribosomal protein uL1 family. In terms of assembly, part of the 50S ribosomal subunit.

Binds directly to 23S rRNA. The L1 stalk is quite mobile in the ribosome, and is involved in E site tRNA release. Its function is as follows. Protein L1 is also a translational repressor protein, it controls the translation of the L11 operon by binding to its mRNA. This Ruthia magnifica subsp. Calyptogena magnifica protein is Large ribosomal subunit protein uL1.